The sequence spans 743 residues: Inhibitor of nuclear factor kappa-B kinase subunit alpha (743 aa).

In terms of domain architecture, Protein kinase spans 15–300 (WDMKDRLGTG…MDCGRPQCFV (286 aa)). ATP-binding positions include 21-29 (LGTGGFGNV) and Lys-44. The active-site Proton acceptor is Asp-144. The interval 453 to 474 (LLRFNTNLTKMKNTMVSASQQL) is leucine-zipper. Residues 736–741 (LDFSWL) are NEMO-binding.

The protein belongs to the protein kinase superfamily. Ser/Thr protein kinase family. I-kappa-B kinase subfamily.

It is found in the cytoplasm. Its subcellular location is the nucleus. It catalyses the reaction L-seryl-[I-kappa-B protein] + ATP = O-phospho-L-seryl-[I-kappa-B protein] + ADP + H(+). With respect to regulation, activated when phosphorylated and inactivated when dephosphorylated. In terms of biological role, phosphorylates inhibitors of NF-kappa-B thus leading to the dissociation of the inhibitor/NF-kappa-B complex and ultimately the degradation of the inhibitor. Phosphorylates 'Ser-10' of histone H3 at NF-kappa-B-regulated promoters during inflammatory responses triggered by cytokines. This is Inhibitor of nuclear factor kappa-B kinase subunit alpha (chuk) from Xenopus tropicalis (Western clawed frog).